The following is a 1396-amino-acid chain: DNA-directed RNA polymerase subunit beta' (1396 aa).

Zn(2+) is bound by residues Cys70, Cys72, Cys85, and Cys88. Residues Asp460, Asp462, and Asp464 each coordinate Mg(2+). Residues Cys814, Cys888, Cys895, and Cys898 each coordinate Zn(2+).

Belongs to the RNA polymerase beta' chain family. In terms of assembly, the RNAP catalytic core consists of 2 alpha, 1 beta, 1 beta' and 1 omega subunit. When a sigma factor is associated with the core the holoenzyme is formed, which can initiate transcription. Requires Mg(2+) as cofactor. The cofactor is Zn(2+).

The enzyme catalyses RNA(n) + a ribonucleoside 5'-triphosphate = RNA(n+1) + diphosphate. Its function is as follows. DNA-dependent RNA polymerase catalyzes the transcription of DNA into RNA using the four ribonucleoside triphosphates as substrates. The sequence is that of DNA-directed RNA polymerase subunit beta' from Chromobacterium violaceum (strain ATCC 12472 / DSM 30191 / JCM 1249 / CCUG 213 / NBRC 12614 / NCIMB 9131 / NCTC 9757 / MK).